Reading from the N-terminus, the 542-residue chain is NXPE family member 4 (542 aa).

An N-terminal signal peptide occupies residues Met1–Phe26. N-linked (GlcNAc...) asparagine glycans are attached at residues Asn91, Asn92, Asn159, and Asn223.

The protein belongs to the NXPE family.

It is found in the secreted. The chain is NXPE family member 4 (Nxpe4) from Rattus norvegicus (Rat).